We begin with the raw amino-acid sequence, 357 residues long: Protein Wnt-5b (357 aa).

A signal peptide spans Met1–Pro18. The cysteines at positions 81 and 92 are disulfide-linked. N-linked (GlcNAc...) asparagine glycosylation is found at Asn91 and Asn97. Intrachain disulfides connect Cys131–Cys139, Cys141–Cys159, Cys215–Cys229, Cys217–Cys224, Cys286–Cys317, Cys302–Cys312, Cys316–Cys356, Cys332–Cys347, Cys334–Cys344, and Cys339–Cys340. Ser221 carries O-palmitoleoyl serine; by PORCN lipidation. 2 N-linked (GlcNAc...) asparagine glycosylation sites follow: Asn289 and Asn303.

This sequence belongs to the Wnt family. Palmitoleoylation is required for efficient binding to frizzled receptors. Depalmitoleoylation leads to Wnt signaling pathway inhibition. In terms of tissue distribution, predominantly in neuroectodermal tissues.

The protein resides in the secreted. The protein localises to the extracellular space. Its subcellular location is the extracellular matrix. Functionally, ligand for members of the frizzled family of seven transmembrane receptors. Probable developmental protein. May be a signaling molecule which affects the development of discrete regions of tissues. Is likely to signal over only few cell diameters. In Ambystoma mexicanum (Axolotl), this protein is Protein Wnt-5b (WNT-5B).